The following is a 233-amino-acid chain: Large ribosomal subunit protein eL6x (233 aa).

Residues 48-72 (HDAKSKVDAPVEKPPKFYPAEDVKK) are compositionally biased toward basic and acidic residues. The interval 48–80 (HDAKSKVDAPVEKPPKFYPAEDVKKPLPNRRTA) is disordered.

It belongs to the eukaryotic ribosomal protein eL6 family.

The protein is Large ribosomal subunit protein eL6x (RPL6C) of Arabidopsis thaliana (Mouse-ear cress).